The chain runs to 183 residues: Protein GrpE (183 aa).

Positions 1–14 (MSNEENKINEEALK) are enriched in basic and acidic residues. The tract at residues 1–20 (MSNEENKINEEALKQQDAAE) is disordered.

Belongs to the GrpE family. As to quaternary structure, homodimer.

The protein localises to the cytoplasm. Functionally, participates actively in the response to hyperosmotic and heat shock by preventing the aggregation of stress-denatured proteins, in association with DnaK and GrpE. It is the nucleotide exchange factor for DnaK and may function as a thermosensor. Unfolded proteins bind initially to DnaJ; upon interaction with the DnaJ-bound protein, DnaK hydrolyzes its bound ATP, resulting in the formation of a stable complex. GrpE releases ADP from DnaK; ATP binding to DnaK triggers the release of the substrate protein, thus completing the reaction cycle. Several rounds of ATP-dependent interactions between DnaJ, DnaK and GrpE are required for fully efficient folding. This chain is Protein GrpE, found in Vibrio vulnificus (strain CMCP6).